A 446-amino-acid polypeptide reads, in one-letter code: Oxysterols receptor LXR-beta (446 aa).

The disordered stretch occupies residues 1-69 (MSSPTSSLDT…PERKRKKGPA (69 aa)). Residues 1-76 (MSSPTSSLDT…GPAPKMLGHE (76 aa)) form a transactivation AF-1; required for ligand-independent transactivation function region. A compositionally biased stretch (low complexity) spans 17–28 (SPQPSTSATSPT). The nuclear receptor DNA-binding region spans 75–152 (HELCRVCGDK…AGMREQCVLS (78 aa)). 2 consecutive NR C4-type zinc fingers follow at residues 78 to 98 (CRVCGDKASGFHYNVLSCEGC) and 116 to 140 (CRGSGTCQMDAFMRRKCQLCRLRKC). The disordered stretch occupies residues 159–201 (KRIQKQQQQQPPPPSEPAASSSGRPAASPGTSEASSQGSGEGE). Over residues 175–196 (PAASSSGRPAASPGTSEASSQG) the composition is skewed to low complexity. The segment at 205-446 (LTAAQELMIQ…LLSEIWDVHE (242 aa)) is transactivation AF-2; required for ligand-dependent transactivation function; mediates interaction with CCAR2. The 239-residue stretch at 208–446 (AQELMIQQLV…LLSEIWDVHE (239 aa)) folds into the NR LBD domain. Glycyl lysine isopeptide (Lys-Gly) (interchain with G-Cter in SUMO2) cross-links involve residues Lys-395 and Lys-433.

Belongs to the nuclear hormone receptor family. NR1 subfamily. As to quaternary structure, forms a heterodimer with RXR. Interacts with CCAR2 (via N-terminus) in a ligand-independent manner. Interacts (when sumoylated) with GPS2; interaction with GPS2 onto hepatic acute phase protein promoters prevents N-Cor corepressor complex dissociation. Interacts with ABCA12 and ABCA1; this interaction is required for ABCA1 localization to the cell surface and is necessary for its normal activity and stability. Sumoylated by SUMO2 at Lys-395 and Lys-433 during the hepatic acute phase response, leading to promote interaction with GPS2 and prevent N-Cor corepressor complex dissociation. Ubiquitous.

It is found in the nucleus. In terms of biological role, nuclear receptor that exhibits a ligand-dependent transcriptional activation activity. Binds preferentially to double-stranded oligonucleotide direct repeats having the consensus half-site sequence 5'-AGGTCA-3' and 4-nt spacing (DR-4). Regulates cholesterol uptake through MYLIP-dependent ubiquitination of LDLR, VLDLR and LRP8; DLDLR and LRP8. Interplays functionally with RORA for the regulation of genes involved in liver metabolism. Induces LPCAT3-dependent phospholipid remodeling in endoplasmic reticulum (ER) membranes of hepatocytes, driving SREBF1 processing and lipogenesis. Via LPCAT3, triggers the incorporation of arachidonate into phosphatidylcholines of ER membranes, increasing membrane dynamics and enabling triacylglycerols transfer to nascent very low-density lipoprotein (VLDL) particles. Via LPCAT3 also counteracts lipid-induced ER stress response and inflammation, likely by modulating SRC kinase membrane compartmentalization and limiting the synthesis of lipid inflammatory mediators. Plays an anti-inflammatory role during the hepatic acute phase response by acting as a corepressor: inhibits the hepatic acute phase response by preventing dissociation of the N-Cor corepressor complex. The protein is Oxysterols receptor LXR-beta (Nr1h2) of Mus musculus (Mouse).